The following is a 1386-amino-acid chain: DNA-directed RNA polymerase subunit beta (1386 aa).

This sequence belongs to the RNA polymerase beta chain family. As to quaternary structure, in plastids the minimal PEP RNA polymerase catalytic core is composed of four subunits: alpha, beta, beta', and beta''. When a (nuclear-encoded) sigma factor is associated with the core the holoenzyme is formed, which can initiate transcription.

It localises to the plastid. It is found in the chloroplast. It carries out the reaction RNA(n) + a ribonucleoside 5'-triphosphate = RNA(n+1) + diphosphate. DNA-dependent RNA polymerase catalyzes the transcription of DNA into RNA using the four ribonucleoside triphosphates as substrates. The sequence is that of DNA-directed RNA polymerase subunit beta from Thalassiosira pseudonana (Marine diatom).